Reading from the N-terminus, the 169-residue chain is Large ribosomal subunit protein uL18 (169 aa).

It belongs to the universal ribosomal protein uL18 family. In terms of assembly, part of the 50S ribosomal subunit. Contacts the 5S and 23S rRNAs.

Its function is as follows. This is one of the proteins that bind and probably mediate the attachment of the 5S RNA into the large ribosomal subunit, where it forms part of the central protuberance. The sequence is that of Large ribosomal subunit protein uL18 from Methanothrix thermoacetophila (strain DSM 6194 / JCM 14653 / NBRC 101360 / PT) (Methanosaeta thermophila).